A 389-amino-acid chain; its full sequence is 8-amino-7-oxononanoate synthase (389 aa).

Arg-31 contacts substrate. Residue 109–110 (GY) participates in pyridoxal 5'-phosphate binding. Residue His-134 coordinates substrate. Pyridoxal 5'-phosphate contacts are provided by residues Ser-180, 205–208 (DEAH), and 236–239 (TLSK). At Lys-239 the chain carries N6-(pyridoxal phosphate)lysine. Residue Thr-349 participates in substrate binding.

The protein belongs to the class-II pyridoxal-phosphate-dependent aminotransferase family. BioF subfamily. In terms of assembly, homodimer. It depends on pyridoxal 5'-phosphate as a cofactor.

It catalyses the reaction 6-carboxyhexanoyl-[ACP] + L-alanine + H(+) = (8S)-8-amino-7-oxononanoate + holo-[ACP] + CO2. It functions in the pathway cofactor biosynthesis; biotin biosynthesis. In terms of biological role, catalyzes the decarboxylative condensation of pimeloyl-[acyl-carrier protein] and L-alanine to produce 8-amino-7-oxononanoate (AON), [acyl-carrier protein], and carbon dioxide. The sequence is that of 8-amino-7-oxononanoate synthase from Mycobacterium ulcerans (strain Agy99).